A 405-amino-acid polypeptide reads, in one-letter code: uncharacterized protein (405 aa).

The protein belongs to the UDP-glycosyltransferase family.

This is an uncharacterized protein from Bacillus subtilis (strain 168).